Consider the following 412-residue polypeptide: DNA replication and repair protein RecF (412 aa).

30-37 (GKNGLGKT) contributes to the ATP binding site.

Belongs to the RecF family.

It localises to the cytoplasm. In terms of biological role, the RecF protein is involved in DNA metabolism; it is required for DNA replication and normal SOS inducibility. RecF binds preferentially to single-stranded, linear DNA. It also seems to bind ATP. The protein is DNA replication and repair protein RecF of Bifidobacterium longum subsp. infantis (strain ATCC 15697 / DSM 20088 / JCM 1222 / NCTC 11817 / S12).